A 76-amino-acid chain; its full sequence is UPF0729 protein C18orf32 (76 aa).

Residues 1 to 37 are necessary for its localzation to the endoplasmic reticulum and lipid droplets; that stretch reads MVCIPCIVIPVLLWIYKKFLEPYIYPLVSPFVSRIWP. The disordered stretch occupies residues 46–76; it reads DTNKGKVNFKGADMNGLPTKGPTEICDKKKD.

The protein belongs to the UPF0729 family. As to quaternary structure, interacts with DERL1 and AMFR. Undergoes ER-associated degradation (ERAD).

The protein localises to the endoplasmic reticulum. Its subcellular location is the lipid droplet. In terms of biological role, may activate the NF-kappa-B signaling pathway. In Homo sapiens (Human), this protein is UPF0729 protein C18orf32 (C18orf32).